Here is a 476-residue protein sequence, read N- to C-terminus: Proline--tRNA ligase 2 (476 aa).

It belongs to the class-II aminoacyl-tRNA synthetase family. ProS type 3 subfamily. As to quaternary structure, homodimer.

It is found in the cytoplasm. It catalyses the reaction tRNA(Pro) + L-proline + ATP = L-prolyl-tRNA(Pro) + AMP + diphosphate. In terms of biological role, catalyzes the attachment of proline to tRNA(Pro) in a two-step reaction: proline is first activated by ATP to form Pro-AMP and then transferred to the acceptor end of tRNA(Pro). This chain is Proline--tRNA ligase 2, found in Bacillus cereus (strain ATCC 14579 / DSM 31 / CCUG 7414 / JCM 2152 / NBRC 15305 / NCIMB 9373 / NCTC 2599 / NRRL B-3711).